Consider the following 197-residue polypeptide: Carbohydrate-binding domain-containing protein C2E1P3.05c (197 aa).

The N-terminal stretch at 1-23 (MLTQSLFLTVLTLALSLVSKTSA) is a signal peptide. CBM1 domains follow at residues 25 to 61 (QCSP…SQCI) and 68 to 104 (PCAK…SQCI). Intrachain disulfides connect cysteine 33–cysteine 50, cysteine 44–cysteine 60, cysteine 76–cysteine 93, and cysteine 87–cysteine 103. The segment at 115–163 (SSAASSTTSTTSSSSLVSSTTLTSSSPSAVSSTTSIPSISSTISSSVST) is disordered. Asparagine 182 and asparagine 193 each carry an N-linked (GlcNAc...) asparagine glycan.

It is found in the secreted. This is Carbohydrate-binding domain-containing protein C2E1P3.05c from Schizosaccharomyces pombe (strain 972 / ATCC 24843) (Fission yeast).